Here is a 74-residue protein sequence, read N- to C-terminus: Peptide BmKb1 (74 aa).

The first 22 residues, 1–22 (MEIKYLLTVFLVLLIVSDHCQA), serve as a signal peptide directing secretion. At Lys40 the chain carries Lysine amide. Positions 46 to 74 (DLNGYIDHFKNFRKRDAELEELLSKLPIY) are excised as a propeptide.

Belongs to the non-disulfide-bridged peptide (NDBP) superfamily. Short antimicrobial peptide (group 4) family. As to expression, expressed by the venom gland.

The protein resides in the secreted. Its subcellular location is the target cell membrane. Its function is as follows. Has antibacterial activity against Gram-positive bacteria S.aureus, M.luteus, B.subtilis, and Gram-negative bacteria E.coli, and P.aeruginosa. The polypeptide is Peptide BmKb1 (Olivierus martensii (Manchurian scorpion)).